Here is a 100-residue protein sequence, read N- to C-terminus: MLEHVLVLSAYLFSVGLYGLITSRNMVRALICLELIFNAVNINFVTFSDFFDSRHLKGSIFAIFVIAIAAAEAAIGLAILSAIYRNRKSIHINQSNLLTK.

The next 3 helical transmembrane spans lie at 1 to 21 (MLEH…YGLI), 31 to 51 (ICLE…SDFF), and 60 to 80 (IFAI…LAIL).

It belongs to the complex I subunit 4L family. In terms of assembly, NDH is composed of at least 16 different subunits, 5 of which are encoded in the nucleus.

Its subcellular location is the plastid. The protein localises to the chloroplast thylakoid membrane. The catalysed reaction is a plastoquinone + NADH + (n+1) H(+)(in) = a plastoquinol + NAD(+) + n H(+)(out). It carries out the reaction a plastoquinone + NADPH + (n+1) H(+)(in) = a plastoquinol + NADP(+) + n H(+)(out). In terms of biological role, NDH shuttles electrons from NAD(P)H:plastoquinone, via FMN and iron-sulfur (Fe-S) centers, to quinones in the photosynthetic chain and possibly in a chloroplast respiratory chain. The immediate electron acceptor for the enzyme in this species is believed to be plastoquinone. Couples the redox reaction to proton translocation, and thus conserves the redox energy in a proton gradient. The protein is NAD(P)H-quinone oxidoreductase subunit 4L, chloroplastic of Trachelium caeruleum (Blue throatwort).